Here is a 371-residue protein sequence, read N- to C-terminus: Cytochrome b (371 aa).

Helical transmembrane passes span 25 to 45 (FGSMLLTCSMIQVLTGFFLAV), 69 to 90 (WMVQNLHAIGASMFFICIYIHI), 105 to 125 (WLSGTTLLIMLMATAFFGYVL), and 170 to 190 (FFALHFILPFGIISLSSLHVL). Residues histidine 75 and histidine 89 each coordinate heme b. Histidine 174 and histidine 188 together coordinate heme b. An a ubiquinone-binding site is contributed by histidine 193. The next 4 membrane-spanning stretches (helical) occupy residues 218 to 238 (MKDLLMLTTTLTLLLMTISFF), 280 to 300 (LGGALALAMSIMILFTVPFIH), 312 to 332 (LMQLMFWTFTSTFVLITWAAT), and 339 to 358 (FISISQVASIIYFTFFISNP).

It belongs to the cytochrome b family. As to quaternary structure, the cytochrome bc1 complex contains 3 respiratory subunits (MT-CYB, CYC1 and UQCRFS1), 2 core proteins (UQCRC1 and UQCRC2) and probably 6 low-molecular weight proteins. Requires heme b as cofactor.

Its subcellular location is the mitochondrion inner membrane. In terms of biological role, component of the ubiquinol-cytochrome c reductase complex (complex III or cytochrome b-c1 complex) that is part of the mitochondrial respiratory chain. The b-c1 complex mediates electron transfer from ubiquinol to cytochrome c. Contributes to the generation of a proton gradient across the mitochondrial membrane that is then used for ATP synthesis. This chain is Cytochrome b (MT-CYB), found in Boa constrictor (Boa).